Here is a 193-residue protein sequence, read N- to C-terminus: Resuscitation-promoting factor Rpf1 (193 aa).

The signal sequence occupies residues 1-35 (MGRHSTKTSSAFTKLAASTIAFGAAATIMAPSASA).

The protein belongs to the transglycosylase family. Rpf subfamily.

It localises to the secreted. Functionally, factor that stimulates resuscitation of dormant cells. Has peptidoglycan (PG) hydrolytic activity. Active in the pM concentration range. Has little to no effect on actively-growing cells. PG fragments could either directly activate the resuscitation pathway of dormant bacteria or serve as a substrate for endogenous Rpf, resulting in low molecular weight products with resuscitation activity. The protein is Resuscitation-promoting factor Rpf1 (rpf1) of Corynebacterium glutamicum (strain ATCC 13032 / DSM 20300 / JCM 1318 / BCRC 11384 / CCUG 27702 / LMG 3730 / NBRC 12168 / NCIMB 10025 / NRRL B-2784 / 534).